The sequence spans 1208 residues: MNTKDTTEVAENSHHLKIFLPKKLLECLPRCPLLPPERLRWNTNEEIASYLITFEKHDEWLSCAPKTRPQNGSIILYNRKKVKYRKDGYLWKKRKDGKTTREDHMKLKVQGMEPVSWQCLYGCYVHSSIVPTFHRRCYWLLQNPDIVLVHYLNVPALEDCGKGCSPIFCSISSDRREWLKWSREELLGQLKPMFHGIKWSCGNGAEEFSVEQLVQQILDTHPTKPAPRTHACLCSGGLGSGSLTHKCSSTKHRIISPKVEPRALALASISHSKPPEPPPLIAPLPPELPKAHTSPSSSSSSSSSSGFAEPLEIRPSPPTSRGGSSRGGTAILLLTGLEQRAGGLTPTRHLAPQAEPRPPVSLAVVVGSEPSAPPAPPSPAFDPDRFLNSPQRGQTYGGGQGVNPDFPEAEGTHTPCPALEPAAALEPQAAARGLAPQLGANGRRGNKFFIQDDDSGEELKGPGTVPPVPSSPPSSPSSPTALPPSGRATRGEALFGGSAGSSSELEPFSLSSFPDLMGELISDEAPGVPAPAPQLSPALNAITDFSPEWSYPEGGVKVLITGPWTEAAEHYSCVFDHIAVPASLVQPGVLRCYCPAHEVGLVSLQVAGREGPLSASVLFEYRARRFLSLPSTQLDWLSLDDSQFRMSILERLEQMEKRMAEIAAAGQAPGQGPEAPPIQDEGQGPGFEARVVVLVESMIPRSTWRGPERLIHGSPFRGMSLLHLAAAQGYARLIETLSQWRSVETGSLDLEQEVDPLNVDHFSCTPLMWACALGHLEAAVLLFCWNRQALSIPDSLGRLPLSVAHSRGHVRLARCLEELQRQELSVEHPLALSPPSSSPDTGLSSASSPSELSDGTFSVTSAYSSAPDGSPPPAPPLASDISMEMIPGQLSCGAPETPLLLMDYEATNSKEPAPSPCGPPLAQDNGAAPEDADSPPAVDVIPVDMISLAKQIIDATPERIKREDFSEFPDAGASPREHTGTVGLSETMSWLASYLENVDHFPSSAPPSELPFERGRLAIPPAPSWAEFLSASTSGKMESDFALLTLSDHEQRELYEAARVIQTAFRKYKGRRLKEQQEVAAAVIQRCYRKYKQLTWIALKFALYKKMTQAAILIQSKFRSYYEQKRFQQSRRAAVLIQQHYRSYRRRPGPPHRPSGPLPARNKGTFLTKKQDQAARKIMRFLRRCRHRMRELKQNQELEGLPQPGLAT.

A DNA-binding region (CG-1) is located at residues 30–160 (RCPLLPPERL…YLNVPALEDC (131 aa)). Positions 78–86 (NRKKVKYRK) match the Nuclear localization signal motif. Disordered regions lie at residues 269–328 (ISHS…SRGG), 366–418 (VGSE…PCPA), and 437–507 (QLGA…ELEP). The segment covering 275 to 288 (PEPPPLIAPLPPEL) has biased composition (pro residues). 2 stretches are compositionally biased toward low complexity: residues 294 to 305 (SPSSSSSSSSSS) and 319 to 328 (TSRGGSSRGG). Pro residues-rich tracts occupy residues 371-380 (SAPPAPPSPA) and 464-476 (TVPP…PSSP). Residues 544 to 622 (DFSPEWSYPE…LSASVLFEYR (79 aa)) enclose the IPT/TIG domain. 3 ANK repeats span residues 717 to 750 (RGMS…SLDL), 762 to 792 (FSCT…ALSI), and 796 to 826 (LGRL…ELSV). Disordered stretches follow at residues 826 to 881 (VEHP…ASDI) and 908 to 936 (NSKE…DSPP). The segment covering 829–853 (PLALSPPSSSPDTGLSSASSPSELS) has biased composition (low complexity). IQ domains lie at 1054–1083 (LYEA…AAAV) and 1107–1136 (MTQA…AAVL). Positions 1144-1166 (YRRRPGPPHRPSGPLPARNKGTF) are disordered.

The protein belongs to the CAMTA family. May interact with calmodulin.

The protein resides in the nucleus. Its function is as follows. Transcription activator. May act as tumor suppressor. The sequence is that of Calmodulin-binding transcription activator 2 (Camta2) from Mus musculus (Mouse).